Reading from the N-terminus, the 107-residue chain is Integration host factor subunit alpha (107 aa).

The protein belongs to the bacterial histone-like protein family. Heterodimer of an alpha and a beta chain.

In terms of biological role, this protein is one of the two subunits of integration host factor, a specific DNA-binding protein that functions in genetic recombination as well as in transcriptional and translational control. The polypeptide is Integration host factor subunit alpha (Brucella anthropi (strain ATCC 49188 / DSM 6882 / CCUG 24695 / JCM 21032 / LMG 3331 / NBRC 15819 / NCTC 12168 / Alc 37) (Ochrobactrum anthropi)).